Consider the following 178-residue polypeptide: MSRIGKRPISIPSGVDAKIEGSKIVFTKGKQEKVLETYGRVGLEIANGELVLKLGGEDAQSKAYWGTYRALANNIVIGLSAGFTKQLEINGVGYKAAVKGSVLELALGFSHPVNYEIPEGVEIAVEKNVITIKGSDKQQIGQIAAEIREFRPPEPYKGKGVKYSDETIIRKAGKTSKK.

It belongs to the universal ribosomal protein uL6 family. In terms of assembly, part of the 50S ribosomal subunit.

In terms of biological role, this protein binds to the 23S rRNA, and is important in its secondary structure. It is located near the subunit interface in the base of the L7/L12 stalk, and near the tRNA binding site of the peptidyltransferase center. The sequence is that of Large ribosomal subunit protein uL6 from Wolinella succinogenes (strain ATCC 29543 / DSM 1740 / CCUG 13145 / JCM 31913 / LMG 7466 / NCTC 11488 / FDC 602W) (Vibrio succinogenes).